Here is a 137-residue protein sequence, read N- to C-terminus: ATP synthase epsilon chain (137 aa).

It belongs to the ATPase epsilon chain family. In terms of assembly, F-type ATPases have 2 components, CF(1) - the catalytic core - and CF(0) - the membrane proton channel. CF(1) has five subunits: alpha(3), beta(3), gamma(1), delta(1), epsilon(1). CF(0) has three main subunits: a, b and c.

The protein resides in the cell membrane. Produces ATP from ADP in the presence of a proton gradient across the membrane. The protein is ATP synthase epsilon chain of Streptococcus agalactiae serotype Ia (strain ATCC 27591 / A909 / CDC SS700).